The sequence spans 626 residues: UvrABC system protein C (626 aa).

The GIY-YIG domain occupies Glu-20–Ile-97. The UVR domain maps to Arg-207–Val-242.

Belongs to the UvrC family. Interacts with UvrB in an incision complex.

The protein localises to the cytoplasm. The UvrABC repair system catalyzes the recognition and processing of DNA lesions. UvrC both incises the 5' and 3' sides of the lesion. The N-terminal half is responsible for the 3' incision and the C-terminal half is responsible for the 5' incision. The polypeptide is UvrABC system protein C (Rickettsia typhi (strain ATCC VR-144 / Wilmington)).